The chain runs to 467 residues: Glycosyl hydrolase family 109 protein 1 (467 aa).

The N-terminal stretch at 1–22 (MKKLLLNTLIGLALLTCQTSFA) is a signal peptide. NAD(+) contacts are provided by residues 66 to 67 (MR), Asp-88, 137 to 140 (WKHH), 157 to 158 (EV), and Asn-186. Residues Tyr-215, Arg-231, 243-246 (YATH), and Tyr-321 each bind substrate. Tyr-243 is a binding site for NAD(+).

This sequence belongs to the Gfo/Idh/MocA family. Glycosyl hydrolase 109 subfamily. NAD(+) serves as cofactor.

Its function is as follows. Glycosidase. The sequence is that of Glycosyl hydrolase family 109 protein 1 from Bacteroides thetaiotaomicron (strain ATCC 29148 / DSM 2079 / JCM 5827 / CCUG 10774 / NCTC 10582 / VPI-5482 / E50).